Reading from the N-terminus, the 386-residue chain is Bifunctional chorismate mutase/prephenate dehydratase (386 aa).

Residues 1 to 92 (MTSENPLLAL…DSVLTQQALL (92 aa)) form the Chorismate mutase domain. Substrate contacts are provided by Arg-11, Arg-28, Lys-39, Asp-48, Glu-52, Ser-84, and Gln-88. The Prephenate dehydratase domain maps to 105-285 (RIAFLGPKGS…NFTRFVVLAR (181 aa)). One can recognise an ACT domain in the interval 299–376 (TLLMATGQQA…RSMKVLGCYP (78 aa)).

The protein localises to the cytoplasm. It catalyses the reaction chorismate = prephenate. The enzyme catalyses prephenate + H(+) = 3-phenylpyruvate + CO2 + H2O. Its pathway is amino-acid biosynthesis; L-phenylalanine biosynthesis; phenylpyruvate from prephenate: step 1/1. The protein operates within metabolic intermediate biosynthesis; prephenate biosynthesis; prephenate from chorismate: step 1/1. Catalyzes the Claisen rearrangement of chorismate to prephenate and the decarboxylation/dehydration of prephenate to phenylpyruvate. This chain is Bifunctional chorismate mutase/prephenate dehydratase (pheA), found in Escherichia coli O157:H7.